The sequence spans 497 residues: Putative endothelial lipase (497 aa).

A signal peptide spans 1–23; sequence MRACPFLLLLLLPLLLSLGRIAA. A disulfide bond links cysteine 73 and cysteine 86. Asparagine 89 and asparagine 145 each carry an N-linked (GlcNAc...) asparagine glycan. The active-site Nucleophile is serine 178. Catalysis depends on aspartate 202, which acts as the Charge relay system. Cysteine 262 and cysteine 282 are joined by a disulfide. Residue histidine 284 is the Charge relay system of the active site. 2 disulfide bridges follow: cysteine 307–cysteine 326 and cysteine 318–cysteine 321. 335–347 is a binding site for heparin; sequence KMRNKRNSKMYLK. Residues 357 to 492 form the PLAT domain; sequence FHYQLKIHVF…CLKMVKVEKH (136 aa). An N-linked (GlcNAc...) asparagine glycan is attached at asparagine 403.

This sequence belongs to the AB hydrolase superfamily. Lipase family. As to quaternary structure, head to tail homodimer. As to expression, expressed by the venom gland.

It localises to the secreted. It carries out the reaction a triacylglycerol + H2O = a diacylglycerol + a fatty acid + H(+). With respect to regulation, inhibited by serum. Functionally, has phospholipase and triglyceride lipase activities. This is Putative endothelial lipase from Crotalus adamanteus (Eastern diamondback rattlesnake).